Reading from the N-terminus, the 246-residue chain is Small ribosomal subunit protein uS2 (246 aa).

Belongs to the universal ribosomal protein uS2 family.

The chain is Small ribosomal subunit protein uS2 from Stutzerimonas stutzeri (strain A1501) (Pseudomonas stutzeri).